Here is a 602-residue protein sequence, read N- to C-terminus: Serine/threonine-protein phosphatase 2A 56 kDa regulatory subunit delta isoform (602 aa).

Residues 1 to 13 (MPYKLKKEKEPPK) are compositionally biased toward basic and acidic residues. The disordered stretch occupies residues 1–96 (MPYKLKKEKE…QSSSRFNLSK (96 aa)). Repeat copies occupy residues 37–38 (QP), 39–40 (QP), 41–42 (QP), 43–44 (QP), and 45–46 (QP). The tract at residues 37-52 (QPQPQPQPQPQAQSQP) is 8 X 2 AA approximate tandem repeats of Q-P. Residues 46–55 (PQAQSQPPSS) show a composition bias toward low complexity. One copy of the 6; approximate repeat lies at 47-48 (QA). A 7; approximate repeat occupies 49–50 (QS). Repeat 8 spans residues 51 to 52 (QP). The residue at position 63 (T63) is a Phosphothreonine. 3 positions are modified to phosphoserine: S88, S89, and S90. The SH3-binding; class I motif lies at 523–530 (RAPPPLPP). Residues 548 to 565 (KRTVETEAVQMLKDIKKE) carry the Nuclear localization signal motif. Residues S573 and S598 each carry the phosphoserine modification.

It belongs to the phosphatase 2A regulatory subunit B56 family. In terms of assembly, PP2A consists of a common heterodimeric core enzyme, composed of a 36 kDa catalytic subunit (subunit C) and a 65 kDa constant regulatory subunit (PR65 or subunit A), that associates with a variety of regulatory subunits. Proteins that associate with the core dimer include three families of regulatory subunits B (the R2/B/PR55/B55, R3/B''/PR72/PR130/PR59 and R5/B'/B56 families), the 48 kDa variable regulatory subunit, viral proteins, and cell signaling molecules. Interacts with the PP2A A subunit PPP2R1A. Interacts with SGO1. Interacts with ADCY8. As to expression, isoform Delta-2 is widely expressed. Isoform Delta-1 is highly expressed in brain.

The protein localises to the cytoplasm. It localises to the nucleus. The B regulatory subunit might modulate substrate selectivity and catalytic activity, and might also direct the localization of the catalytic enzyme to a particular subcellular compartment. This is Serine/threonine-protein phosphatase 2A 56 kDa regulatory subunit delta isoform (PPP2R5D) from Homo sapiens (Human).